Here is a 251-residue protein sequence, read N- to C-terminus: Methionine aminopeptidase (251 aa).

Substrate is bound at residue His-76. A divalent metal cation-binding residues include Asp-93, Asp-104, and His-168. His-175 lines the substrate pocket. The a divalent metal cation site is built by Glu-202 and Glu-233.

The protein belongs to the peptidase M24A family. Methionine aminopeptidase type 1 subfamily. Monomer. Co(2+) is required as a cofactor. The cofactor is Zn(2+). It depends on Mn(2+) as a cofactor. Requires Fe(2+) as cofactor.

It carries out the reaction Release of N-terminal amino acids, preferentially methionine, from peptides and arylamides.. Its function is as follows. Removes the N-terminal methionine from nascent proteins. The N-terminal methionine is often cleaved when the second residue in the primary sequence is small and uncharged (Met-Ala-, Cys, Gly, Pro, Ser, Thr, or Val). Requires deformylation of the N(alpha)-formylated initiator methionine before it can be hydrolyzed. The polypeptide is Methionine aminopeptidase (Staphylococcus epidermidis (strain ATCC 12228 / FDA PCI 1200)).